A 167-amino-acid polypeptide reads, in one-letter code: LIM domain transcription factor LMO4.1 (167 aa).

Polar residues predominate over residues 1–17 (MVNNRVTESTTTAVSSN). The tract at residues 1 to 20 (MVNNRVTESTTTAVSSNGGP) is disordered. LIM zinc-binding domains are found at residues 22–84 (KACA…LFGS) and 86–148 (GACS…GLLS).

In terms of biological role, acts as a positive cofactor of GATA transcription factors to establish the identity of the ventral mesoderm during gastrulation. Down-regulation in the dorsal mesoderm is necessary for the proper formation of this territory since, when present, lmo4 may bind ldb1 and restrict the availability of this cofactor for Spemman organizer transcription factors. At neurula stages, suppresses primary neuron differentiation and modulates gene expression at the Isthmic Organizer of the midbrain-hindbrain boundary. This Xenopus tropicalis (Western clawed frog) protein is LIM domain transcription factor LMO4.1 (lmo4.1).